The following is a 263-amino-acid chain: S-methyl-5'-thioadenosine phosphorylase (263 aa).

Phosphate-binding positions include Thr13, 55-56, and 88-89; these read RH and SA. Met186 lines the substrate pocket. Thr187 is a phosphate binding site. 210–212 is a substrate binding site; the sequence is DYD.

This sequence belongs to the PNP/MTAP phosphorylase family. MTAP subfamily. Homohexamer. Dimer of a homotrimer.

It carries out the reaction S-methyl-5'-thioadenosine + phosphate = 5-(methylsulfanyl)-alpha-D-ribose 1-phosphate + adenine. It functions in the pathway amino-acid biosynthesis; L-methionine biosynthesis via salvage pathway; S-methyl-5-thio-alpha-D-ribose 1-phosphate from S-methyl-5'-thioadenosine (phosphorylase route): step 1/1. In terms of biological role, catalyzes the reversible phosphorylation of S-methyl-5'-thioadenosine (MTA) to adenine and 5-methylthioribose-1-phosphate. Involved in the breakdown of MTA, a major by-product of polyamine biosynthesis. Responsible for the first step in the methionine salvage pathway after MTA has been generated from S-adenosylmethionine. Has broad substrate specificity with 6-aminopurine nucleosides as preferred substrates. The chain is S-methyl-5'-thioadenosine phosphorylase from Nitrosopumilus maritimus (strain SCM1).